The sequence spans 406 residues: Cysteine desulfurase (406 aa).

Position 226 is an N6-(pyridoxal phosphate)lysine (Lys226). Cys364 functions as the Cysteine persulfide intermediate in the catalytic mechanism.

It belongs to the class-V pyridoxal-phosphate-dependent aminotransferase family. Csd subfamily. In terms of assembly, homodimer. Interacts with SufE and the SufBCD complex composed of SufB, SufC and SufD. The interaction with SufE is required to mediate the direct transfer of the sulfur atom from the S-sulfanylcysteine. The cofactor is pyridoxal 5'-phosphate.

It is found in the cytoplasm. The enzyme catalyses (sulfur carrier)-H + L-cysteine = (sulfur carrier)-SH + L-alanine. It carries out the reaction L-selenocysteine + AH2 = hydrogenselenide + L-alanine + A + H(+). It participates in cofactor biosynthesis; iron-sulfur cluster biosynthesis. In terms of biological role, cysteine desulfurases mobilize the sulfur from L-cysteine to yield L-alanine, an essential step in sulfur metabolism for biosynthesis of a variety of sulfur-containing biomolecules. Component of the suf operon, which is activated and required under specific conditions such as oxidative stress and iron limitation. Acts as a potent selenocysteine lyase in vitro, that mobilizes selenium from L-selenocysteine. Selenocysteine lyase activity is however unsure in vivo. The chain is Cysteine desulfurase from Salmonella dublin (strain CT_02021853).